The sequence spans 338 residues: Glycerol-3-phosphate dehydrogenase [NAD(P)+] (338 aa).

The NADPH site is built by S11, W12, H32, R33, and K106. Sn-glycerol 3-phosphate-binding residues include K106, G137, and S139. Residue A141 participates in NADPH binding. Sn-glycerol 3-phosphate contacts are provided by K192, D245, S255, R256, and N257. Catalysis depends on K192, which acts as the Proton acceptor. Position 256 (R256) interacts with NADPH. 2 residues coordinate NADPH: V280 and E282.

Belongs to the NAD-dependent glycerol-3-phosphate dehydrogenase family.

It localises to the cytoplasm. The enzyme catalyses sn-glycerol 3-phosphate + NAD(+) = dihydroxyacetone phosphate + NADH + H(+). It catalyses the reaction sn-glycerol 3-phosphate + NADP(+) = dihydroxyacetone phosphate + NADPH + H(+). It functions in the pathway membrane lipid metabolism; glycerophospholipid metabolism. Catalyzes the reduction of the glycolytic intermediate dihydroxyacetone phosphate (DHAP) to sn-glycerol 3-phosphate (G3P), the key precursor for phospholipid synthesis. This chain is Glycerol-3-phosphate dehydrogenase [NAD(P)+], found in Lysinibacillus sphaericus (strain C3-41).